Here is a 49-residue protein sequence, read N- to C-terminus: Large ribosomal subunit protein bL33B (49 aa).

The protein belongs to the bacterial ribosomal protein bL33 family.

Functionally, plays a role in sporulation at high temperatures. This chain is Large ribosomal subunit protein bL33B (rpmGB), found in Bacillus subtilis (strain 168).